Consider the following 114-residue polypeptide: DNA-(apurinic or apyrimidinic site) endonuclease (114 aa).

It belongs to the apurinic/apyrimidinic endonuclease family. Interacts with host Ung; this interaction allows the viral AP endonuclease to localize to newly formed AP sites and cleave them, leading to inhibition of bacterial growth.

Performs endonucleolytic cleavage at abasic sites, which are generated by the base-excision activity of host Ung. The cleavage generates a 5'-deoxyribose phosphate and 3'-hydroxyl end. The sites are specifically recognized through the formation of a complex with host Ung. The viral endonucleolytic activity damages the host DNA, blocks host DNA replication and induces cell division arrest. This may provide an advantage for the phage and save nucleotides for the viral replication since it specifically targets the host DNA, which possesses more misincorporated uracils than the viral genome. The polypeptide is DNA-(apurinic or apyrimidinic site) endonuclease (Escherichia phage T5 (Enterobacteria phage T5)).